The chain runs to 700 residues: Glycine--tRNA ligase beta subunit (700 aa).

This sequence belongs to the class-II aminoacyl-tRNA synthetase family. As to quaternary structure, tetramer of two alpha and two beta subunits.

The protein localises to the cytoplasm. The enzyme catalyses tRNA(Gly) + glycine + ATP = glycyl-tRNA(Gly) + AMP + diphosphate. This is Glycine--tRNA ligase beta subunit from Helicobacter pylori (strain Shi470).